We begin with the raw amino-acid sequence, 98 residues long: NADH-ubiquinone oxidoreductase chain 4L (98 aa).

3 helical membrane-spanning segments follow: residues 1 to 21 (MPII…GMLI), 29 to 49 (SLLC…LMAL), and 58 to 78 (IVPI…LALL).

Belongs to the complex I subunit 4L family. As to quaternary structure, core subunit of respiratory chain NADH dehydrogenase (Complex I) which is composed of 45 different subunits.

The protein resides in the mitochondrion inner membrane. The catalysed reaction is a ubiquinone + NADH + 5 H(+)(in) = a ubiquinol + NAD(+) + 4 H(+)(out). Its function is as follows. Core subunit of the mitochondrial membrane respiratory chain NADH dehydrogenase (Complex I) which catalyzes electron transfer from NADH through the respiratory chain, using ubiquinone as an electron acceptor. Part of the enzyme membrane arm which is embedded in the lipid bilayer and involved in proton translocation. The chain is NADH-ubiquinone oxidoreductase chain 4L (MT-ND4L) from Colobus guereza (Mantled guereza).